A 406-amino-acid polypeptide reads, in one-letter code: Acetylornithine aminotransferase (406 aa).

Pyridoxal 5'-phosphate is bound by residues 113 to 114 and Phe145; that span reads GT. Arg148 contacts N(2)-acetyl-L-ornithine. 233–236 is a binding site for pyridoxal 5'-phosphate; sequence DEIQ. Lys262 is modified (N6-(pyridoxal phosphate)lysine). Ser290 provides a ligand contact to N(2)-acetyl-L-ornithine. Pyridoxal 5'-phosphate is bound at residue Thr291.

It belongs to the class-III pyridoxal-phosphate-dependent aminotransferase family. ArgD subfamily. As to quaternary structure, homodimer. Pyridoxal 5'-phosphate serves as cofactor.

It is found in the cytoplasm. It carries out the reaction N(2)-acetyl-L-ornithine + 2-oxoglutarate = N-acetyl-L-glutamate 5-semialdehyde + L-glutamate. Its pathway is amino-acid biosynthesis; L-arginine biosynthesis; N(2)-acetyl-L-ornithine from L-glutamate: step 4/4. In Leptospira interrogans serogroup Icterohaemorrhagiae serovar Lai (strain 56601), this protein is Acetylornithine aminotransferase.